A 465-amino-acid chain; its full sequence is Serine carboxypeptidase-like 19 (465 aa).

Residues 1–23 (MRNLSFIVLFLLTLFFIHHLVDA) form the signal peptide. Residue 77-79 (TGG) participates in substrate binding. 3 disulfide bridges follow: Cys82–Cys353, Cys246–Cys260, and Cys284–Cys320. An N-linked (GlcNAc...) asparagine glycan is attached at Asn103. 177–179 (DSY) is a binding site for substrate. Ser178 is a catalytic residue. Positions 292–317 (DTPNIRTDRRRVMKEFSVNDSSSLPP) are cleaved as a propeptide — linker peptide. N-linked (GlcNAc...) asparagine glycosylation is found at Asn310 and Asn373. The active site involves Asp389. An N-linked (GlcNAc...) asparagine glycan is attached at Asn405. Residue 439–443 (KGGGH) participates in substrate binding. The active site involves His443.

The protein belongs to the peptidase S10 family. Heterodimer. N-glycosylated. In terms of tissue distribution, expressed in roots and flowers, and at lower levels in young leaves and seedlings. Expressed in mature seeds and detected in expanding siliques.

Its subcellular location is the secreted. It carries out the reaction 1-O-(trans-sinapoyl)-beta-D-glucose + choline = O-sinapoylcholine + D-glucose. Its activity is regulated as follows. Slightly inhibited by phenylmethylsulfonyl fluoride (PMSF). In terms of biological role, involved in plants secondary metabolism. Functions as acyltransferase to form the sinapate ester sinapoylcholine also known as sinapine. Able to convert in vitro benzoylglucose into benzoylcholine. This Arabidopsis thaliana (Mouse-ear cress) protein is Serine carboxypeptidase-like 19.